The following is a 122-amino-acid chain: uncharacterized protein (122 aa).

3 consecutive transmembrane segments (helical) span residues 33 to 53 (ALGLLAAAVALVQLVPELTIP), 58 to 78 (VLGVVLAILAILTSGMGLLRW), and 97 to 117 (PGYLAVGLCVVGVVALALVVA).

It to E.coli YidH.

The protein resides in the cell membrane. This is an uncharacterized protein from Mycobacterium tuberculosis (strain CDC 1551 / Oshkosh).